The primary structure comprises 213 residues: MRLILIRHAQARCNILEDDALMDAYDPHCELTEAGIGQAVKLRDEYPVSLTPSVIYSSPLKRARETAGIFRGRYPSVPFVEDERLSELKAPESFIPPITQGQWDLYLEQRIRSPHLEIVKGLESLDVQRERIERFYKDLFRKYAEEACNIVIFTHAFSIQLSILFFLGLGNEQLLQWQIKASNTAMHIIHYDPTSGSFLLESLNNRSHLQTTG.

The active-site Tele-phosphohistidine intermediate is His-8. His-155 is a catalytic residue.

This sequence belongs to the histidine phosphatase superfamily.

It catalyses the reaction 5''-phosphoribostamycin + H2O = ribostamycin + phosphate. Its pathway is antibiotic biosynthesis; butirosin biosynthesis. Catalyzes dephosphorylation of 5''-phosphoribostamycin to generate ribostamycinin the biosynthetic pathway of butirosin. This Niallia circulans (Bacillus circulans) protein is 5''-phosphoribostamycin phosphatase (btrP).